The following is a 66-amino-acid chain: Type 3 secretion system chaperone YscE (66 aa).

Belongs to the YscE family. As to quaternary structure, component of the heterodimeric YscE-YscG chaperone. The YscE-YscG chaperone forms a stable ternary complex with YscF/SctF.

The protein localises to the cytoplasm. Its function is as follows. Chaperone of the type III secretion system (T3SS), also called injectisome, which is used to inject bacterial effector proteins into eukaryotic host cells. Along with YscG, prevents premature polymerization of the YscF/SctF needle protein within the cytoplasm. Required for Yop secretion. This is Type 3 secretion system chaperone YscE from Yersinia enterocolitica.